The primary structure comprises 156 residues: Oleosin Zm-I (156 aa).

Residues 1–30 form a disordered region; that stretch reads MADHHRGATGGGGGYGDLQRGGGMHGEAQQ. The residue at position 2 (Ala-2) is an N-acetylalanine. The interval 2–42 is polar; the sequence is ADHHRGATGGGGGYGDLQRGGGMHGEAQQQQKQGAMMTALK. Over residues 8-25 the composition is skewed to gly residues; the sequence is ATGGGGGYGDLQRGGGMH. Residues 43–114 form a hydrophobic region; that stretch reads AATAATFGGS…AALSVFSWMY (72 aa). The next 2 membrane-spanning stretches (helical) occupy residues 51–71 and 95–115; these read GSMLVLSGLILAGTVIALTVA and GFVTSGGLGVAALSVFSWMYK.

This sequence belongs to the oleosin family. The N-terminus is blocked.

The protein localises to the lipid droplet. Its subcellular location is the membrane. Its function is as follows. May have a structural role to stabilize the lipid body during desiccation of the seed by preventing coalescence of the oil. Probably interacts with both lipid and phospholipid moieties of lipid bodies. May also provide recognition signals for specific lipase anchorage in lipolysis during seedling growth. This Zea mays (Maize) protein is Oleosin Zm-I (OLE16).